We begin with the raw amino-acid sequence, 628 residues long: Serine/threonine-protein kinase Nek11 (628 aa).

Residues 30-288 (YVLQQKLGSG…AADILKAPYM (259 aa)) form the Protein kinase domain. ATP is bound by residues 36-44 (LGSGSFGTV) and Lys-62. Asp-159 serves as the catalytic Proton acceptor. A Phosphoserine; by CHEK1 modification is found at Ser-274. The stretch at 347 to 385 (WLRKLQAADERARRLKKIAEENYKENDKRMQALRSRNVG) forms a coiled coil. The span at 452 to 463 (SEDSEEQEEEMI) shows a compositional bias: acidic residues. The tract at residues 452–475 (SEDSEEQEEEMIFSEAGGDTKEEE) is disordered.

It belongs to the protein kinase superfamily. NEK Ser/Thr protein kinase family. NIMA subfamily. Interacts with NEK2. The cofactor is Mn(2+). Mg(2+) is required as a cofactor. In terms of processing, phosphorylated by NEK2. Phosphorylation at Ser-274 is important for its activation.

The protein resides in the nucleus. The protein localises to the nucleolus. It catalyses the reaction L-seryl-[protein] + ATP = O-phospho-L-seryl-[protein] + ADP + H(+). It carries out the reaction L-threonyl-[protein] + ATP = O-phospho-L-threonyl-[protein] + ADP + H(+). Its activity is regulated as follows. Autorepressed by intramolecular binding of the C-terminus which dissociates following phosphorylation by NEK2. Activated in response to DNA damage. Inhibited by zinc. Functionally, protein kinase which plays an important role in the G2/M checkpoint response to DNA damage. Controls degradation of CDC25A by directly phosphorylating it on residues whose phosphorylation is required for BTRC-mediated polyubiquitination and degradation. The chain is Serine/threonine-protein kinase Nek11 from Mus musculus (Mouse).